A 70-amino-acid chain; its full sequence is UPF0426 protein ssl0294 (70 aa).

The protein belongs to the UPF0426 family.

In Synechocystis sp. (strain ATCC 27184 / PCC 6803 / Kazusa), this protein is UPF0426 protein ssl0294.